A 163-amino-acid polypeptide reads, in one-letter code: Glutathione peroxidase 2 (163 aa).

The active site involves cysteine 36.

This sequence belongs to the glutathione peroxidase family.

The protein resides in the cytoplasm. It carries out the reaction 2 glutathione + H2O2 = glutathione disulfide + 2 H2O. Its function is as follows. May constitute a glutathione peroxidase-like protective system against oxidative stresses. This is Glutathione peroxidase 2 (gpx-2) from Caenorhabditis elegans.